Consider the following 612-residue polypeptide: uncharacterized protein (612 aa).

This is an uncharacterized protein from Rickettsia prowazekii (strain Madrid E).